The sequence spans 499 residues: Probable folate-biopterin transporter 2 (499 aa).

Transmembrane regions (helical) follow at residues 43 to 63, 92 to 112, 116 to 136, 141 to 161, 185 to 205, 209 to 229, 266 to 286, 302 to 322, 330 to 350, 354 to 374, 399 to 419, and 435 to 455; these read WSFVFGVVSLYGINQGLGGSL, IPWIIKPLWGILTDVLPIFGF, PYFILAGVLGVVSLLFISLHS, YLALFWMTISSAAMAIADVTI, LSSSIGALLGFFMSGILVHLV, GVFGLLTFPFALVSVVGIVFS, LYMYISLTLGLNIHEGLFYWF, FILSIGSIGSILAATLYQLVL, LCLWTQLLFALSGMLDLILVF, LKFGLPDYLFIVVDEIVSQMI, FALLMSIDNAGLMTSSWLGGI, and WLAVLVRNVMRLLPLCFLFLV.

It belongs to the major facilitator superfamily. Folate-biopterin transporter (TC 2.A.71) family.

It is found in the membrane. Could mediate folate transport. The polypeptide is Probable folate-biopterin transporter 2 (Arabidopsis thaliana (Mouse-ear cress)).